We begin with the raw amino-acid sequence, 624 residues long: Aliphatic sulfonate oxidoreductase, WOR-like subunit (624 aa).

Positions 77, 93, 94, 96, 195, 196, 198, and 199 each coordinate tungstopterin. Residues Asp-299, Cys-302, and Cys-306 each contribute to the [4Fe-4S] cluster site. Residues Asp-353, Leu-357, Asp-358, Gly-359, Thr-470, Asp-490, Ile-494, Cys-495, and Asn-496 each contribute to the tungstopterin site. Cys-495 is a binding site for [4Fe-4S] cluster. A disordered region spans residues 552–575; sequence KDDDNPPRFYEPLPSGPVKGKAPN.

This sequence belongs to the AOR/FOR family. As to quaternary structure, heterodimer composed of a small WOR5-S subunit, with four [4Fe-4S] clusters, and a large WOR5-L subunit, containing the active site tungsto-bispyranopterin cofactor as well as another [4Fe-4S] cluster. [4Fe-4S] cluster is required as a cofactor. It depends on tungstopterin as a cofactor.

It localises to the cytoplasm. It catalyses the reaction an aliphatic sulfonate + 4 oxidized [4Fe-4S]-[ferredoxin] + 2 H2O = 4 reduced [4Fe-4S]-[ferredoxin] + a carboxylate + sulfite + 6 H(+). The catalysed reaction is an aliphatic sulfonate + 2 oxidized [4Fe-4S]-[ferredoxin] + H2O = 2 reduced [4Fe-4S]-[ferredoxin] + an aldehyde + sulfite + 3 H(+). The enzyme catalyses 2 oxidized [4Fe-4S]-[ferredoxin] + an aldehyde + H2O = 2 reduced [4Fe-4S]-[ferredoxin] + a carboxylate + 3 H(+). It carries out the reaction 4 oxidized [4Fe-4S]-[ferredoxin] + taurine + 2 H2O = 4 reduced [4Fe-4S]-[ferredoxin] + sulfite + glycine + 6 H(+). It catalyses the reaction 2 oxidized [4Fe-4S]-[ferredoxin] + taurine + H2O = aminoacetaldehyde + 2 reduced [4Fe-4S]-[ferredoxin] + sulfite + 3 H(+). The catalysed reaction is aminoacetaldehyde + 2 oxidized [4Fe-4S]-[ferredoxin] + H2O = 2 reduced [4Fe-4S]-[ferredoxin] + glycine + 3 H(+). Functionally, WOR-like catalytic subunit of an oxidoreductase that can desulfonate and oxidize aliphatic sulfonates such as taurine. The activity involves two steps: an oxidative desulfonation reaction, followed by the activation of a second water molecule and oxidation of the resulting aldehyde. May be involved in the oxidation of various aliphatic sulfonates and also phosphonates. In vitro, has a broad substrate specificity with a high affinity for several substituted and nonsubstituted aliphatic and aromatic aldehydes with various chain lengths, with methyl viologen or benzyl viologen as electron acceptor. Ferredoxin is the physiological electron acceptor. The protein is Aliphatic sulfonate oxidoreductase, WOR-like subunit of Pyrococcus furiosus (strain ATCC 43587 / DSM 3638 / JCM 8422 / Vc1).